A 352-amino-acid polypeptide reads, in one-letter code: ER-derived vesicles protein ERV41 (352 aa).

Topologically, residues 1–23 (MAGLKTFDAFPKTEEQYKKKSTK) are cytoplasmic. Residues 24 to 44 (GGLTSLLTYLFLLFIAWTEFG) form a helical membrane-spanning segment. Residues 45 to 311 (EYFGGYIDQQ…FLVRLVAICS (267 aa)) lie on the Lumenal side of the membrane. The chain crosses the membrane as a helical span at residues 312 to 332 (FLVYCASWIFTLLDMALITIM). Over 333-352 (GPKWSLRYQPDDKTKGILDR) the chain is Cytoplasmic. Residues 349-350 (IL) carry the Isoleucine-leucine motif motif.

This sequence belongs to the ERGIC family. Interacts with ERV46.

Its subcellular location is the endoplasmic reticulum membrane. The protein localises to the golgi apparatus membrane. It localises to the cytoplasmic vesicle. The protein resides in the COPII-coated vesicle membrane. Its function is as follows. Constituent of COPII-coated endoplasmic reticulum-derived transport vesicles. Required for efficient transport of a subset of secretory proteins to the Golgi. The C-terminal Ile-Leu motif is required for exit from the endoplasmic reticulum. Facilitates retrograde transport from the Golgi to the endoplasmic reticulum. The protein is ER-derived vesicles protein ERV41 (ERV41) of Saccharomyces cerevisiae (strain ATCC 204508 / S288c) (Baker's yeast).